The chain runs to 57 residues: Large ribosomal subunit protein bL32c (57 aa).

Component of the chloroplast large ribosomal subunit (LSU). Mature 70S chloroplast ribosomes of higher plants consist of a small (30S) and a large (50S) subunit. The 30S small subunit contains 1 molecule of ribosomal RNA (16S rRNA) and 24 different proteins. The 50S large subunit contains 3 rRNA molecules (23S, 5S and 4.5S rRNA) and 33 different proteins.

The protein resides in the plastid. It is found in the chloroplast. Functionally, component of the chloroplast ribosome (chloro-ribosome), a dedicated translation machinery responsible for the synthesis of chloroplast genome-encoded proteins, including proteins of the transcription and translation machinery and components of the photosynthetic apparatus. In Spinacia oleracea (Spinach), this protein is Large ribosomal subunit protein bL32c (rpl32).